The following is a 348-amino-acid chain: Mannonate dehydratase (348 aa).

The protein belongs to the mannonate dehydratase family. It depends on Fe(2+) as a cofactor. Mn(2+) serves as cofactor.

It catalyses the reaction D-mannonate = 2-dehydro-3-deoxy-D-gluconate + H2O. The protein operates within carbohydrate metabolism; pentose and glucuronate interconversion. In terms of biological role, catalyzes the dehydration of D-mannonate. The sequence is that of Mannonate dehydratase from Streptococcus agalactiae serotype Ia (strain ATCC 27591 / A909 / CDC SS700).